The chain runs to 202 residues: Dephospho-CoA kinase (202 aa).

The 198-residue stretch at 4–201 (VVALTGGIAS…QKYLAMSRQN (198 aa)) folds into the DPCK domain. 12–17 (ASGKTT) is an ATP binding site.

Belongs to the CoaE family.

It localises to the cytoplasm. It carries out the reaction 3'-dephospho-CoA + ATP = ADP + CoA + H(+). The protein operates within cofactor biosynthesis; coenzyme A biosynthesis; CoA from (R)-pantothenate: step 5/5. In terms of biological role, catalyzes the phosphorylation of the 3'-hydroxyl group of dephosphocoenzyme A to form coenzyme A. The sequence is that of Dephospho-CoA kinase from Vibrio cholerae serotype O1 (strain ATCC 39315 / El Tor Inaba N16961).